The sequence spans 250 residues: Indole-3-glycerol phosphate synthase (250 aa).

This sequence belongs to the TrpC family.

The enzyme catalyses 1-(2-carboxyphenylamino)-1-deoxy-D-ribulose 5-phosphate + H(+) = (1S,2R)-1-C-(indol-3-yl)glycerol 3-phosphate + CO2 + H2O. It participates in amino-acid biosynthesis; L-tryptophan biosynthesis; L-tryptophan from chorismate: step 4/5. The sequence is that of Indole-3-glycerol phosphate synthase from Metallosphaera sedula (strain ATCC 51363 / DSM 5348 / JCM 9185 / NBRC 15509 / TH2).